Consider the following 529-residue polypeptide: Nuclear distribution protein PAC1 (529 aa).

Positions 68-89 (RLQHKIIDLEGEVSNLRTVIDS) form a coiled coil. WD repeat units lie at residues 120 to 159 (QSHQ…SLIP), 165 to 218 (AHIR…HIRT), 221 to 261 (GHEH…CIKT), 264 to 318 (GHSD…GLSL), 321 to 395 (GHTH…FRPH), 416 to 455 (GHQS…VNGR), and 496 to 529 (TEED…RLWS).

The protein belongs to the WD repeat LIS1/nudF family. Self-associates. Interacts with NDL1 and dynein.

Its subcellular location is the cytoplasm. The protein resides in the cytoskeleton. It localises to the spindle pole. Functionally, positively regulates the activity of the minus-end directed microtubule motor protein dynein. Plays a central role in positioning the mitotic spindle at the bud neck during cell division. Targets cytoplasmic dynein to microtubule plus ends, thereby promoting dynein-mediated microtubule sliding along the bud cortex and consequently the movement of the mitotic spindle to the bud neck. The polypeptide is Nuclear distribution protein PAC1 (Debaryomyces hansenii (strain ATCC 36239 / CBS 767 / BCRC 21394 / JCM 1990 / NBRC 0083 / IGC 2968) (Yeast)).